The sequence spans 186 residues: Dynactin subunit 3 (186 aa).

N-acetylalanine is present on A2. A coiled-coil region spans residues 135–157 (QQQDQCVEITEESKALLEEYNKT).

The protein belongs to the dynactin subunit 3 family. As to quaternary structure, subunit of dynactin, a multiprotein complex part of a tripartite complex with dynein and a adapter, such as BICDL1, BICD2 or HOOK3. The dynactin complex is built around ACTR1A/ACTB filament and consists of an actin-related filament composed of a shoulder domain, a pointed end and a barbed end. Its length is defined by its flexible shoulder domain. The soulder is composed of 2 DCTN1 subunits, 4 DCTN2 and 2 DCTN3. The 4 DCNT2 (via N-terminus) bind the ACTR1A filament and act as molecular rulers to determine the length. The pointed end is important for binding dynein-dynactin cargo adapters. Consists of 4 subunits: ACTR10, DCNT4, DCTN5 and DCTN6. The barbed end is composed of a CAPZA1:CAPZB heterodimers, which binds ACTR1A/ACTB filament and dynactin and stabilizes dynactin.

It is found in the cytoplasm. Its subcellular location is the cytoskeleton. The protein resides in the microtubule organizing center. It localises to the centrosome. The protein localises to the chromosome. It is found in the centromere. Its subcellular location is the kinetochore. The protein resides in the spindle. It localises to the cleavage furrow. The protein localises to the midbody. Its function is as follows. Part of the dynactin complex that activates the molecular motor dynein for ultra-processive transport along microtubules. Together with dynein may be involved in spindle assembly and cytokinesis. This Bos taurus (Bovine) protein is Dynactin subunit 3 (DCTN3).